The primary structure comprises 541 residues: uncharacterized protein (541 aa).

The protein localises to the virion. This is an uncharacterized protein from Acanthamoeba polyphaga mimivirus (APMV).